Here is a 232-residue protein sequence, read N- to C-terminus: 7-cyano-7-deazaguanine synthase (232 aa).

ATP is bound at residue 8–18; sequence FSGGQDSTTCL. Residues Cys-189, Cys-198, Cys-201, and Cys-204 each contribute to the Zn(2+) site.

This sequence belongs to the QueC family. Zn(2+) serves as cofactor.

The catalysed reaction is 7-carboxy-7-deazaguanine + NH4(+) + ATP = 7-cyano-7-deazaguanine + ADP + phosphate + H2O + H(+). It functions in the pathway purine metabolism; 7-cyano-7-deazaguanine biosynthesis. Its function is as follows. Catalyzes the ATP-dependent conversion of 7-carboxy-7-deazaguanine (CDG) to 7-cyano-7-deazaguanine (preQ(0)). This is 7-cyano-7-deazaguanine synthase from Yersinia pseudotuberculosis serotype O:1b (strain IP 31758).